The chain runs to 430 residues: Adenylosuccinate synthetase (430 aa).

Residues 12–18 (GDEGKGK) and 40–42 (GHT) each bind GTP. Asp13 serves as the catalytic Proton acceptor. Asp13 and Gly40 together coordinate Mg(2+). Residues 13–16 (DEGK), 38–41 (NAGH), Thr128, Arg142, Gln223, Thr238, and Arg302 contribute to the IMP site. Catalysis depends on His41, which acts as the Proton donor. 298 to 304 (TTTGRPR) serves as a coordination point for substrate. GTP contacts are provided by residues Arg304, 330–332 (SID), and 412–414 (SVG).

It belongs to the adenylosuccinate synthetase family. As to quaternary structure, homodimer. The cofactor is Mg(2+).

It localises to the cytoplasm. It carries out the reaction IMP + L-aspartate + GTP = N(6)-(1,2-dicarboxyethyl)-AMP + GDP + phosphate + 2 H(+). Its pathway is purine metabolism; AMP biosynthesis via de novo pathway; AMP from IMP: step 1/2. Plays an important role in the de novo pathway of purine nucleotide biosynthesis. Catalyzes the first committed step in the biosynthesis of AMP from IMP. This Streptococcus pyogenes serotype M2 (strain MGAS10270) protein is Adenylosuccinate synthetase.